We begin with the raw amino-acid sequence, 515 residues long: 1-pyrroline-5-carboxylate dehydrogenase (515 aa).

Active-site residues include Glu-286 and Cys-320.

It belongs to the aldehyde dehydrogenase family. RocA subfamily.

The enzyme catalyses L-glutamate 5-semialdehyde + NAD(+) + H2O = L-glutamate + NADH + 2 H(+). The protein operates within amino-acid degradation; L-proline degradation into L-glutamate; L-glutamate from L-proline: step 2/2. The protein is 1-pyrroline-5-carboxylate dehydrogenase of Bacillus pumilus (strain SAFR-032).